A 570-amino-acid polypeptide reads, in one-letter code: Urease subunit alpha (570 aa).

Residues 131 to 570 (GGMDSHIHFI…LPMAQRYFLF (440 aa)) form the Urease domain. Ni(2+) contacts are provided by His136, His138, and Lys219. Lys219 carries the post-translational modification N6-carboxylysine. His221 is a substrate binding site. Ni(2+) is bound by residues His248 and His274. Residue His322 is the Proton donor of the active site. Asp362 lines the Ni(2+) pocket.

The protein belongs to the metallo-dependent hydrolases superfamily. Urease alpha subunit family. Heterotrimer of UreA (gamma), UreB (beta) and UreC (alpha) subunits. Three heterotrimers associate to form the active enzyme. Ni cation serves as cofactor. In terms of processing, carboxylation allows a single lysine to coordinate two nickel ions.

It is found in the cytoplasm. The enzyme catalyses urea + 2 H2O + H(+) = hydrogencarbonate + 2 NH4(+). It functions in the pathway nitrogen metabolism; urea degradation; CO(2) and NH(3) from urea (urease route): step 1/1. This Allorhizobium ampelinum (strain ATCC BAA-846 / DSM 112012 / S4) (Agrobacterium vitis (strain S4)) protein is Urease subunit alpha.